Here is a 92-residue protein sequence, read N- to C-terminus: LYR motif-containing protein 4 homolog (92 aa).

The stretch at 48–68 (AEIDRQMAEGQQNLELIRRQV) forms a coiled coil.

It belongs to the complex I LYR family. In terms of assembly, component of the mitochondrial core iron-sulfur cluster (ISC) assembly complex at least composed of the cysteine desulfurase Nfs1, the scaffold protein IscU, the accessory protein bcn92/Isd11/Lyrm4, and probably fh/frataxin. Interacts with Nfs1.

Its subcellular location is the mitochondrion. Stabilizing factor of the core iron-sulfur cluster (ISC) assembly complex that regulates the stability and cysteine desulfurase activity of Nfs1 and participates in the [2Fe-2S] clusters assembly on the scaffolding protein IscU. The chain is LYR motif-containing protein 4 homolog from Drosophila melanogaster (Fruit fly).